Reading from the N-terminus, the 558-residue chain is Glucose-6-phosphate isomerase (558 aa).

Glu-363 acts as the Proton donor in catalysis. Active-site residues include His-394 and Lys-522.

The protein belongs to the GPI family.

Its subcellular location is the cytoplasm. It catalyses the reaction alpha-D-glucose 6-phosphate = beta-D-fructose 6-phosphate. It functions in the pathway carbohydrate biosynthesis; gluconeogenesis. Its pathway is carbohydrate degradation; glycolysis; D-glyceraldehyde 3-phosphate and glycerone phosphate from D-glucose: step 2/4. Functionally, catalyzes the reversible isomerization of glucose-6-phosphate to fructose-6-phosphate. This is Glucose-6-phosphate isomerase from Blochmanniella floridana.